The following is a 190-amino-acid chain: Threonylcarbamoyl-AMP synthase (190 aa).

The YrdC-like domain maps to 7–190 (NFVLADIVRA…ALTGKRFRQG (184 aa)).

Belongs to the SUA5 family. TsaC subfamily.

The protein localises to the cytoplasm. The catalysed reaction is L-threonine + hydrogencarbonate + ATP = L-threonylcarbamoyladenylate + diphosphate + H2O. In terms of biological role, required for the formation of a threonylcarbamoyl group on adenosine at position 37 (t(6)A37) in tRNAs that read codons beginning with adenine. Catalyzes the conversion of L-threonine, HCO(3)(-)/CO(2) and ATP to give threonylcarbamoyl-AMP (TC-AMP) as the acyladenylate intermediate, with the release of diphosphate. The sequence is that of Threonylcarbamoyl-AMP synthase from Yersinia pestis bv. Antiqua (strain Angola).